We begin with the raw amino-acid sequence, 131 residues long: Small ribosomal subunit protein uS8 (131 aa).

This sequence belongs to the universal ribosomal protein uS8 family. As to quaternary structure, part of the 30S ribosomal subunit. Contacts proteins S5 and S12.

In terms of biological role, one of the primary rRNA binding proteins, it binds directly to 16S rRNA central domain where it helps coordinate assembly of the platform of the 30S subunit. The protein is Small ribosomal subunit protein uS8 of Burkholderia multivorans (strain ATCC 17616 / 249).